The following is a 263-amino-acid chain: MARGPKKHLKRLNAPKAWMLDKLGGVYAPRPSTGPHKLRECLPLVIFLRNRLKYALTGNEVLKIVKQRLIKVDGKVRTDPTYPAGFMDVVSIEKTNELFRLIYDVKGRFTVHRITPEEAKYKLCKVKRVSTGPKNVPFLVTHDGRTIRYPDPLIKVNDSVQLDIATSKIMDFIKFESGNLCMITGGRNLGRVGTIVSRERHPGSFDIVHIKDSTGHTFATRLNNVFIIGKGTKAYISLPRGKGVRLTIAEERDKRIAAKVAGQ.

An S4 RNA-binding domain is found at 42-104 (LPLVIFLRNR…TNELFRLIYD (63 aa)).

It belongs to the eukaryotic ribosomal protein eS4 family.

The polypeptide is Small ribosomal subunit protein eS4 (RpS4) (Spodoptera frugiperda (Fall armyworm)).